Reading from the N-terminus, the 315-residue chain is 1-aminocyclopropane-1-carboxylate oxidase 1 (315 aa).

A Fe2OG dioxygenase domain is found at Pro-153–Pro-253. Fe cation-binding residues include His-177, Asp-179, and His-234.

Belongs to the iron/ascorbate-dependent oxidoreductase family. It depends on Fe cation as a cofactor. As to expression, predominantly expressed in the petals and the stigma and style.

It carries out the reaction 1-aminocyclopropane-1-carboxylate + L-ascorbate + O2 = ethene + L-dehydroascorbate + hydrogen cyanide + CO2 + 2 H2O. It functions in the pathway alkene biosynthesis; ethylene biosynthesis via S-adenosyl-L-methionine; ethylene from S-adenosyl-L-methionine: step 2/2. The chain is 1-aminocyclopropane-1-carboxylate oxidase 1 (ACO1) from Solanum lycopersicum (Tomato).